The chain runs to 316 residues: Probable inactive poly [ADP-ribose] polymerase SRO4 (316 aa).

Residues 1–28 (MDYSKTEETPINEEQGSTNSSESRSNEE) form a disordered region. Low complexity predominate over residues 14–23 (EQGSTNSSES). One can recognise a PARP catalytic domain in the interval 28 to 255 (ELFSDCDQQH…KSPWISFPVL (228 aa)). In terms of domain architecture, RST spans 243–314 (KNPKSPWISF…IKSVGQKVHK (72 aa)).

It is found in the nucleus. Functionally, probable inactive ADP-ribosyltransferase that may be involved in stress and developmental responses. The chain is Probable inactive poly [ADP-ribose] polymerase SRO4 (SRO4) from Arabidopsis thaliana (Mouse-ear cress).